A 221-amino-acid polypeptide reads, in one-letter code: Coiled-coil domain-containing protein 70 (221 aa).

Residues 129 to 168 (NALWEKDRNLLQEDKALWEEEKALWVEERALLEEEKALWE) are a coiled coil.

This is Coiled-coil domain-containing protein 70 (CCDC70) from Macaca fascicularis (Crab-eating macaque).